We begin with the raw amino-acid sequence, 464 residues long: Centrosomal protein of 55 kDa (464 aa).

Residues 1-11 (MSSRSTKDLIK) are compositionally biased toward basic and acidic residues. Residues 1–26 (MSSRSTKDLIKSKWGSKPSNSKSETT) are disordered. 3 coiled-coil regions span residues 22–186 (KSET…QWLV), 238–337 (NDLL…FLYT), and 374–403 (QHQLHVILKELRKARNQITQLESLKQLHEF). The residue at position 96 (Ser96) is a Phosphoserine. Residues 157–236 (PNCFNSSINN…GYLQEEKQKC (80 aa)) are interaction with TSG101. The interaction with PDCD6IP stretch occupies residues 160–214 (FNSSINNIHEMEIQLKDALEKNQQWLVYDQQREVYVKGLLAKIFELEKKTETAAH). The tract at residues 355 to 464 (QMQACTLDFE…LLVHVEYCSK (110 aa)) is required for localization to the interphase centrosome and to the midbody during cytokinesis. Phosphoserine; by CDK1 and MAPK1 occurs at positions 425 and 428. Thr430 bears the Phosphothreonine mark. Ser436 carries the post-translational modification Phosphoserine; by PLK1.

Homodimer. Interacts (phosphorylated on Ser-425 and Ser-428) with PLK1; the interaction is indirect via the MTMR3:MTMR4 heterooligomer, occurs during early mitosis, regulates the phosphorylation of CEP55 by PLK1 and its recruitment to the midbody where it can mediate cell abscission. Interacts with AKAP9/CG-NAP; the interaction occurs in interphase and is lost upon mitotic entry. Interacts with PCNT/Kendrin; the interaction occurs in interphase and is lost upon mitotic entry. Directly interacts with PDCD6IP; this interaction is required for PDCD6IP targeting to the midbody; CEP55 binds PDCD6IP in a 2:1 stoichiometry; PDCD6IP competes with TSG101 for the same binding site. Interacts with TSG101; TSG101 competes with PDCD6IP for the same binding site; interaction is required for cytokinesis but not for viral budding. Interacts with MVB12A, VPS37B, VPS37C and VPS28. There is a hierachy of phosphorylation, where both Ser-425 and Ser-428 are phosphorylated at the onset of mitosis, prior to Ser-436. Phosphorylation at Ser-425 and Ser-428 is required for dissociation from the centrosome at the G2/M boundary. Phosphorylation at the 3 sites, Ser-425, Ser-428 and Ser-436, is required for protein function at the final stages of cell division to complete cytokinesis successfully. As to expression, expressed in embryonic brain. Expressed in fetal brain ganglionic eminence, kidney tubules and multinucleate neurons in the temporal cortex. Expressed in adult brain, cerebellum, kidney tubules, intestine and muscles (at protein level). Widely expressed, mostly in proliferative tissues. Highly expressed in testis. Intermediate levels in adult and fetal thymus, as well as in various cancer cell lines. Low levels in different parts of the digestive tract, bone marrow, lymph nodes, placenta, fetal heart and fetal spleen. Hardly detected in brain.

It is found in the cytoplasm. It localises to the cytoskeleton. The protein resides in the microtubule organizing center. Its subcellular location is the centrosome. The protein localises to the centriole. It is found in the cleavage furrow. It localises to the midbody. The protein resides in the midbody ring. In terms of biological role, plays a role in mitotic exit and cytokinesis. Recruits PDCD6IP and TSG101 to midbody during cytokinesis. Required for successful completion of cytokinesis. Not required for microtubule nucleation. Plays a role in the development of the brain and kidney. This chain is Centrosomal protein of 55 kDa, found in Homo sapiens (Human).